A 264-amino-acid chain; its full sequence is Acyl-[acyl-carrier-protein]--UDP-N-acetylglucosamine O-acyltransferase (264 aa).

It belongs to the transferase hexapeptide repeat family. LpxA subfamily. As to quaternary structure, homotrimer.

It localises to the cytoplasm. The enzyme catalyses a (3R)-hydroxyacyl-[ACP] + UDP-N-acetyl-alpha-D-glucosamine = a UDP-3-O-[(3R)-3-hydroxyacyl]-N-acetyl-alpha-D-glucosamine + holo-[ACP]. It participates in glycolipid biosynthesis; lipid IV(A) biosynthesis; lipid IV(A) from (3R)-3-hydroxytetradecanoyl-[acyl-carrier-protein] and UDP-N-acetyl-alpha-D-glucosamine: step 1/6. Functionally, involved in the biosynthesis of lipid A, a phosphorylated glycolipid that anchors the lipopolysaccharide to the outer membrane of the cell. This Rickettsia peacockii (strain Rustic) protein is Acyl-[acyl-carrier-protein]--UDP-N-acetylglucosamine O-acyltransferase.